A 307-amino-acid chain; its full sequence is MEIQFLGTGAGQPSKSRNTQAIALKMLDERNEIWLFDCGEASQHQILNTAIKPRKITKIFITHLHGDHIFGLPGFLSSRSFQSSDEQTDLDLYGPVGIKEFVLTGLRISGSRLGYRINFHEIDSAGKIFEDDSFEVYTDLLDHTIFCLGYRVVEKNRVGELDANALKEAGLPFGPLFGKIKKGEVVAYDGKTFDPKDYIGADKVGKIVTILGDTRKTKTAVRLAWQADLLVHEATYEASESKMARAHGHSTTKQAADVAKEAGVNRLLLTHISARYVGPLVGQLVREAQAVHANTFVSKDLYEEKIG.

7 residues coordinate Zn(2+): His63, His65, Asp67, His68, His143, Asp213, and His271. Asp67 (proton acceptor) is an active-site residue.

It belongs to the RNase Z family. As to quaternary structure, homodimer. Zn(2+) serves as cofactor.

It carries out the reaction Endonucleolytic cleavage of RNA, removing extra 3' nucleotides from tRNA precursor, generating 3' termini of tRNAs. A 3'-hydroxy group is left at the tRNA terminus and a 5'-phosphoryl group is left at the trailer molecule.. In terms of biological role, zinc phosphodiesterase, which displays some tRNA 3'-processing endonuclease activity. Probably involved in tRNA maturation, by removing a 3'-trailer from precursor tRNA. The chain is Ribonuclease Z from Lactococcus lactis subsp. cremoris (strain SK11).